The sequence spans 207 residues: Ras-related protein rab7 (207 aa).

GTP-binding positions include 15-22, 34-40, 63-67, 125-128, and 156-157; these read GDSGVGKT, SNQYKAT, DTAGQ, NKID, and AK. Positions 37–45 match the Effector region motif; it reads YKATIGADF. S-geranylgeranyl cysteine attachment occurs at residues Cys205 and Cys207. Cys207 bears the Cysteine methyl ester mark.

Belongs to the small GTPase superfamily. Rab family. (Microbial infection) Interacts with Singapore grouper iridoviral proteins VP69 (ORF69) and VP101 (ORF101). As to expression, ubiquitously expressed. Expressed in liver, spleen, kidney, brain, intestine, heart, skin, muscle, gill and stomach.

It is found in the late endosome membrane. Its subcellular location is the lysosome membrane. Functionally, key regulator in endo-lysosomal trafficking. Governs early-to-late endosomal maturation, microtubule minus-end as well as plus-end directed endosomal migration and positioning, and endosome-lysosome transport through different protein-protein interaction cascades. Plays important roles in microbial pathogen infection and survival, as well as in participating in the life cycle of viruses. The sequence is that of Ras-related protein rab7 from Epinephelus coioides (Orange-spotted grouper).